Consider the following 1039-residue polypeptide: Pleckstrin homology domain-containing family G member 5 (1039 aa).

2 disordered regions span residues 58 to 105 and 185 to 277; these read NVST…RRHT and PGDE…SSES. Composition is skewed to basic and acidic residues over residues 185–199 and 217–228; these read PGDEGKVEQGVKDSK and ERVDPQSRRESS. Over residues 259–277 the composition is skewed to low complexity; that stretch reads SSCSLPVGSSVGSSGSSES. The region spanning 372 to 564 is the DH domain; that stretch reads HQQEAVWELL…ERFIHHVNTC (193 aa). The 101-residue stretch at 620 to 720 folds into the PH domain; that stretch reads QLLLEGSLRM…WVDTLYNAQN (101 aa). Disordered regions lie at residues 739–785 and 800–836; these read QHLQ…ASDG and TLSSPEFDRGPFSSQSDEASLSNTTSSITPTSELLPL. Residues 744–757 are compositionally biased toward acidic residues; the sequence is LEEEEDEQEEEGEE. 2 stretches are compositionally biased toward polar residues: residues 758 to 776 and 811 to 831; these read SGTSAASSPTILRKSSNSL and FSSQSDEASLSNTTSSITPTS. Thr-760 bears the Phosphothreonine mark. Residue Ser-765 is modified to Phosphoserine. Thr-876 is subject to Phosphothreonine. A phosphoserine mark is found at Ser-878, Ser-903, and Ser-908. Residues 967-989 form a disordered region; sequence PLSESENRPSHKAGGPADSARRK.

As to quaternary structure, interacts with GIPC1/synectin and RHOA. In terms of tissue distribution, selectively expressed in cortical and hippocampal neurons with prominent expression in the cell bodies and dendrites. Weakly expressed in rat fad pad ECs (RFPECs).

It localises to the cytoplasm. The protein localises to the perinuclear region. Its subcellular location is the cell membrane. It is found in the cell junction. The protein resides in the cell projection. It localises to the lamellipodium. Its function is as follows. Functions as a guanine exchange factor (GEF) for RAB26 and thus regulates autophagy of synaptic vesicles in axon terminal of motoneurons. Involved in the control of neuronal cell differentiation. Plays a role in angiogenesis through regulation of endothelial cells chemotaxis. Also affects the migration, adhesion, and matrix/bone degradation in macrophages and osteoclasts. The protein is Pleckstrin homology domain-containing family G member 5 (Plekhg5) of Rattus norvegicus (Rat).